The primary structure comprises 416 residues: Neurotensin receptor type 2 (416 aa).

Over 1–32 (METSSPWPPRPSPSAGLSLEARLGVDTRLWAK) the chain is Extracellular. Residues 33–55 (VLFTALYSLIFAFGTAGNALSVH) traverse the membrane as a helical segment. Residues 56-64 (VVLKARAGR) are Cytoplasmic-facing. Residues 65-87 (PGRLRYHVLSLALSALLLLLVSM) form a helical membrane-spanning segment. Over 88-109 (PMELYNFVWSHYPWVFGDLGCR) the chain is Extracellular. A disulfide bond links Cys108 and Cys194. The helical transmembrane segment at 110–131 (GYYFVRELCAYATVLSVASLSA) threads the bilayer. The Cytoplasmic segment spans residues 132–154 (ERCLAVCQPLRARRLLTPRRTRR). The helical transmembrane segment at 155-176 (LLSLVWVASLGLALPMAVIMGQ) threads the bilayer. Residues 177–216 (KHEVESADGEPEPASRVCTVLVSRATLQVFIQVNVLVSFA) are Extracellular-facing. A helical membrane pass occupies residues 217–237 (LPLALTAFLNGITVNHLMALY). At 238–297 (SQVPSASAQVSSIPSRLELLSEEGLLGFITWRKTLSLGVQASLVRHKDASQIRSLQHSAQ) the chain is on the cytoplasmic side. Residues 298–318 (VLRAIVAVYVICWLPYHARRL) traverse the membrane as a helical segment. Over 319–337 (MYCYIPDDGWTNELYDFYH) the chain is Extracellular. The chain crosses the membrane as a helical span at residues 338–358 (YFYMVTNTLFYVSSAVTPILY). Residues 359-416 (NAVSSSFRKLFLESLGSLCGEQHSLVPLPQEAPESTTSTYSFRLWGSPRNPSLGEIQV) lie on the Cytoplasmic side of the membrane. Cys377 carries S-palmitoyl cysteine lipidation. Ser410 is modified (phosphoserine).

The protein belongs to the G-protein coupled receptor 1 family. Neurotensin receptor subfamily. NTSR2 sub-subfamily. In terms of tissue distribution, abundant in cortex and hypothalamus, and lower levels seen in the heart and intestine.

It localises to the cell membrane. Its function is as follows. Receptor for the tridecapeptide neurotensin. It is associated with G proteins that activate a phosphatidylinositol-calcium second messenger system. In Rattus norvegicus (Rat), this protein is Neurotensin receptor type 2 (Ntsr2).